Here is a 135-residue protein sequence, read N- to C-terminus: T-cell receptor beta chain V region 3H.25 (135 aa).

The signal sequence occupies residues 1–20; it reads MATRLLCYTVLCLLGARILN. A v segment region spans residues 21–115; it reads SKVIQTPRYL…SALYLCASSL (95 aa). The cysteines at positions 42 and 111 are disulfide-linked. Residues 116–118 are d segment; that stretch reads FGT. Positions 119–135 are j segment; the sequence is SDYTFGSGTRLLVIGKA.

This chain is T-cell receptor beta chain V region 3H.25, found in Mus musculus (Mouse).